Here is a 208-residue protein sequence, read N- to C-terminus: 2-phospho-L-lactate guanylyltransferase (208 aa).

The protein belongs to the CofC family. In terms of assembly, homodimer.

The enzyme catalyses (2S)-2-phospholactate + GTP + H(+) = (2S)-lactyl-2-diphospho-5'-guanosine + diphosphate. Its pathway is cofactor biosynthesis; coenzyme F420 biosynthesis. Functionally, guanylyltransferase that catalyzes the activation of (2S)-2-phospholactate (2-PL) as (2S)-lactyl-2-diphospho-5'-guanosine, via the condensation of 2-PL with GTP. It is involved in the biosynthesis of coenzyme F420, a hydride carrier cofactor. The polypeptide is 2-phospho-L-lactate guanylyltransferase (Methanosarcina mazei (strain ATCC BAA-159 / DSM 3647 / Goe1 / Go1 / JCM 11833 / OCM 88) (Methanosarcina frisia)).